Reading from the N-terminus, the 164-residue chain is UPF0262 protein Xaut_1232 (164 aa).

It belongs to the UPF0262 family.

The sequence is that of UPF0262 protein Xaut_1232 from Xanthobacter autotrophicus (strain ATCC BAA-1158 / Py2).